Here is a 65-residue protein sequence, read N- to C-terminus: Large ribosomal subunit protein bL35 (65 aa).

The interval 1 to 65 is disordered; it reads MPKMKTNRAA…GRLDRMLPYL (65 aa). Residues 10–44 show a composition bias toward basic residues; it reads AAKRFRKTASGKYKAGHANRSHILTKKATKRKRNL. The segment covering 50-65 has biased composition (basic and acidic residues); the sequence is VRAEDAGRLDRMLPYL.

Belongs to the bacterial ribosomal protein bL35 family.

This is Large ribosomal subunit protein bL35 from Xylella fastidiosa (strain M12).